The chain runs to 167 residues: Transcriptional regulator MraZ (167 aa).

SpoVT-AbrB domains lie at 8–51 (ESHH…YGDH) and 92–135 (SLPT…KPET).

Belongs to the MraZ family. As to quaternary structure, forms oligomers.

The protein localises to the cytoplasm. The protein resides in the nucleoid. The chain is Transcriptional regulator MraZ from Ruegeria sp. (strain TM1040) (Silicibacter sp.).